Consider the following 100-residue polypeptide: Phosphoribosyl-ATP pyrophosphatase (100 aa).

The protein belongs to the PRA-PH family.

It is found in the cytoplasm. The catalysed reaction is 1-(5-phospho-beta-D-ribosyl)-ATP + H2O = 1-(5-phospho-beta-D-ribosyl)-5'-AMP + diphosphate + H(+). The protein operates within amino-acid biosynthesis; L-histidine biosynthesis; L-histidine from 5-phospho-alpha-D-ribose 1-diphosphate: step 2/9. The sequence is that of Phosphoribosyl-ATP pyrophosphatase (hisE) from Methanopyrus kandleri (strain AV19 / DSM 6324 / JCM 9639 / NBRC 100938).